A 132-amino-acid polypeptide reads, in one-letter code: Transmembrane protein 170B (132 aa).

Over 1 to 37 the chain is Extracellular; sequence MKAEGGDHSMINLSVQQVLSLWAHGTVLRNLTEMWYW. Asparagine 12 carries an N-linked (GlcNAc...) asparagine glycan. Residues 38-58 form a helical membrane-spanning segment; the sequence is IFLWALFSSLFVHGAAGVLMF. Residues 59 to 68 are Cytoplasmic-facing; it reads VMLQRHRQGR. Residues 69-89 traverse the membrane as a helical segment; sequence VISVIAVSIGFLASVTGAMIT. The Extracellular segment spans residues 90 to 104; sequence SAAVAGIYRVAGKNM. A helical membrane pass occupies residues 105–125; it reads APLEALVWGVGQTVLTLIISF. Over 126-132 the chain is Cytoplasmic; sequence SRILATL.

It belongs to the TMEM170 family. Interacts with CTNNB1. In terms of tissue distribution, expressed in normal breast tissues. Down-regulated in breast cancer cells (at protein level).

The protein resides in the cell membrane. Negatively regulates the canonical Wnt signaling in breast cancer cells. Exerts an inhibitory effect on breast cancer growth by inhibiting CTNNB1 stabilization and nucleus translocation, which reduces the activity of Wnt targets. In Homo sapiens (Human), this protein is Transmembrane protein 170B (TMEM170B).